Reading from the N-terminus, the 228-residue chain is LOB domain-containing protein 30 (228 aa).

The LOB domain maps to 16–118 (GPCGACKFLR…TELSYLQAHL (103 aa)). The tract at residues 188-228 (SNMGGGGELQALAREFIHGGQMPAQPSPGTSGSASSVIKRE) is disordered. The span at 214–228 (SPGTSGSASSVIKRE) shows a compositional bias: polar residues.

It belongs to the LOB domain-containing protein family. In terms of tissue distribution, expressed in roots, stems, leaves and flowers. Expressed in vascular tissues of hypocotyls, leaves, roots, developing floral organs and siliques.

Its function is as follows. Involved in the positive regulation of tracheary element (TE) differentiation. Involved in a positive feedback loop that maintains or promotes NAC030/VND7 expression that regulates TE differentiation-related genes. This is LOB domain-containing protein 30 (LBD30) from Arabidopsis thaliana (Mouse-ear cress).